A 261-amino-acid polypeptide reads, in one-letter code: Type III pantothenate kinase (261 aa).

6–13 is an ATP binding site; sequence DAGNTNVV. 108–111 contacts substrate; it reads GADR. The active-site Proton acceptor is the aspartate 110. Aspartate 130 contributes to the K(+) binding site. Threonine 133 contacts ATP. Threonine 185 is a substrate binding site.

The protein belongs to the type III pantothenate kinase family. Homodimer. NH4(+) is required as a cofactor. The cofactor is K(+).

The protein resides in the cytoplasm. The enzyme catalyses (R)-pantothenate + ATP = (R)-4'-phosphopantothenate + ADP + H(+). It functions in the pathway cofactor biosynthesis; coenzyme A biosynthesis; CoA from (R)-pantothenate: step 1/5. Catalyzes the phosphorylation of pantothenate (Pan), the first step in CoA biosynthesis. This chain is Type III pantothenate kinase, found in Rhodospirillum centenum (strain ATCC 51521 / SW).